We begin with the raw amino-acid sequence, 616 residues long: Putative L-type lectin-domain containing receptor kinase I.10 (616 aa).

A signal peptide spans 1–22 (MAWGLFQILMISFFHLIKLSSQ). Residues 23-288 (QETSFVYETF…RAEHKNLSPL (266 aa)) are Extracellular-facing. The legume-lectin like stretch occupies residues 24 to 258 (ETSFVYETFR…YQYVLSWSFS (235 aa)). N-linked (GlcNAc...) asparagine glycosylation is found at Asn56, Asn124, Asn181, Asn204, and Asn225. The helical transmembrane segment at 289–309 (FIDLLGFLAIMGLCTLTGMYF) threads the bilayer. Residues 310–616 (FKRGKYAEIT…SAASSATNSP (307 aa)) lie on the Cytoplasmic side of the membrane. One can recognise a Protein kinase domain in the interval 343 to 616 (FHKDGFLGKG…SAASSATNSP (274 aa)). ATP contacts are provided by residues 349-357 (LGKGGFGEV) and Lys371. Catalysis depends on Asp467, which acts as the Proton acceptor.

This sequence in the C-terminal section; belongs to the protein kinase superfamily. Ser/Thr protein kinase family. The protein in the N-terminal section; belongs to the leguminous lectin family.

It localises to the cell membrane. It catalyses the reaction L-seryl-[protein] + ATP = O-phospho-L-seryl-[protein] + ADP + H(+). The enzyme catalyses L-threonyl-[protein] + ATP = O-phospho-L-threonyl-[protein] + ADP + H(+). The chain is Putative L-type lectin-domain containing receptor kinase I.10 (LECRK110) from Arabidopsis thaliana (Mouse-ear cress).